The chain runs to 586 residues: Arginine--tRNA ligase (586 aa).

A 'HIGH' region motif is present at residues 131–141 (ANPTGPMHVGH).

The protein belongs to the class-I aminoacyl-tRNA synthetase family. In terms of assembly, monomer.

The protein localises to the cytoplasm. The enzyme catalyses tRNA(Arg) + L-arginine + ATP = L-arginyl-tRNA(Arg) + AMP + diphosphate. This is Arginine--tRNA ligase from Rhizobium rhizogenes (strain K84 / ATCC BAA-868) (Agrobacterium radiobacter).